The following is a 526-amino-acid chain: Cyclin-L1 (526 aa).

Residues 1–36 are disordered; sequence MASGPHSTATAAAAASSAAPSAGGSSSGTTTTTTTT. Cyclin-like regions lie at residues 88–190 and 203–287; these read ELIQ…RVLK and KIIV…ETLR. The interval 318 to 526 is disordered; sequence KGLNPDGTPA…SRSGHGRHRR (209 aa). At threonine 325 the chain carries Phosphothreonine. Serine 335 and serine 338 each carry phosphoserine. Glycyl lysine isopeptide (Lys-Gly) (interchain with G-Cter in SUMO2) cross-links involve residues lysine 339 and lysine 347. Positions 342-352 are enriched in basic and acidic residues; it reads SPREVKAEEKS. Phosphoserine occurs at positions 352 and 355. Residues 361–370 show a composition bias toward basic and acidic residues; the sequence is VKKEPEDRQQ. Lysine 362 participates in a covalent cross-link: Glycyl lysine isopeptide (Lys-Gly) (interchain with G-Cter in SUMO2). A Phosphoserine modification is found at serine 374. Basic residues-rich tracts occupy residues 382–418, 438–452, 460–476, and 486–498; these read DSKR…RRSR, RRHH…KAKH, SNRH…RSQS, and KKHR…HRDR. The segment at 390–432 is RS; that stretch reads RSASRSRSRTRSRSRSHTPRRHYNNRRSRSGTYSSRSRSRSRS. Serine 445 bears the Phosphoserine mark. The span at 499-508 shows a compositional bias: basic and acidic residues; sequence RERSRSFERS. Residues 509–526 show a composition bias toward basic residues; sequence HKSKHHGGSRSGHGRHRR.

It belongs to the cyclin family. Cyclin L subfamily. In terms of assembly, (Microbial infection) Interacts with human herpes virus 1 (HHV-1) transcriptional regulator ICP22. As to quaternary structure, interacts with POLR2A via its hyperphosphorylated C-terminal domain (CTD). Interacts with CDK11A, CDK12 and CDK13. Isoforms 1 and 2, but not isoform 3, interact with CDK11B. May form a ternary complex with CDK11B and casein kinase II (CKII). Interacts with pre-mRNA-splicing factors, including at least SRSF1, SRSF2 and SRSF7/SLU7. Widely expressed. Overexpression in primary tumors of head and neck squamous cell carcinomas (HNSCC).

The protein resides in the nucleus speckle. It is found in the nucleus. Its subcellular location is the nucleoplasm. Involved in pre-mRNA splicing. Functions in association with cyclin-dependent kinases (CDKs). Inhibited by the CDK-specific inhibitor CDKN1A/p21. May play a role in the regulation of RNA polymerase II (pol II). May be a candidate proto-oncogene in head and neck squamous cell carcinomas (HNSCC). This Homo sapiens (Human) protein is Cyclin-L1 (CCNL1).